The chain runs to 291 residues: Acetyl-coenzyme A carboxylase carboxyl transferase subunit beta (291 aa).

One can recognise a CoA carboxyltransferase N-terminal domain in the interval 34–291 (MWTKCSNCNS…LILHGVNKYE (258 aa)). Zn(2+) contacts are provided by cysteine 38, cysteine 41, cysteine 57, and cysteine 60. The C4-type zinc finger occupies 38–60 (CSNCNSMIYYEDLENNKYVCTKC).

The protein belongs to the AccD/PCCB family. As to quaternary structure, acetyl-CoA carboxylase is a heterohexamer composed of biotin carboxyl carrier protein (AccB), biotin carboxylase (AccC) and two subunits each of ACCase subunit alpha (AccA) and ACCase subunit beta (AccD). Zn(2+) serves as cofactor.

The protein resides in the cytoplasm. It catalyses the reaction N(6)-carboxybiotinyl-L-lysyl-[protein] + acetyl-CoA = N(6)-biotinyl-L-lysyl-[protein] + malonyl-CoA. It participates in lipid metabolism; malonyl-CoA biosynthesis; malonyl-CoA from acetyl-CoA: step 1/1. Its function is as follows. Component of the acetyl coenzyme A carboxylase (ACC) complex. Biotin carboxylase (BC) catalyzes the carboxylation of biotin on its carrier protein (BCCP) and then the CO(2) group is transferred by the transcarboxylase to acetyl-CoA to form malonyl-CoA. The sequence is that of Acetyl-coenzyme A carboxylase carboxyl transferase subunit beta from Clostridium botulinum (strain Alaska E43 / Type E3).